The primary structure comprises 1248 residues: Structural polyprotein (1248 aa).

The segment covering 1–10 has biased composition (polar residues); sequence MEFIPTQTFY. Residues 1–104 are disordered; the sequence is MEFIPTQTFY…KKKKPGRRER (104 aa). Residues 36 to 68 are host transcription inhibition; the sequence is RKAGQLAQLISAVNKLTMRAVPQQKPRKNRKNK. Residues 60 to 72 show a composition bias toward basic residues; that stretch reads KPRKNRKNKKQKQ. Positions 61-99 match the Nuclear localization signal motif; the sequence is PRKNRKNKKQKQKQQAPRNNMNQKKQPPKKKPAQKKKKP. A compositionally biased stretch (low complexity) spans 73 to 85; sequence KQQAPRNNMNQKK. The binding to the viral RNA stretch occupies residues 84-114; that stretch reads KKQPPKKKPAQKKKKPGRRERMCMKIENDCI. The span at 86–101 shows a compositional bias: basic residues; that stretch reads QPPKKKPAQKKKKPGR. Residues 99–113 are ribosome-binding; that stretch reads PGRRERMCMKIENDC. Cys-113 and Cys-128 form a disulfide bridge. In terms of domain architecture, Peptidase S3 spans 113-261; that stretch reads CIFEVKHEGK…KITPEGAEEW (149 aa). His-139 functions as the Charge relay system in the catalytic mechanism. The short motif at 144 to 154 is the Nuclear export signal element; sequence IDNADLAKLAF. The interval 155–160 is interaction with spike glycoprotein E2; it reads KRSSKY. The Charge relay system role is filled by Asp-161. The dimerization of the capsid protein stretch occupies residues 183–193; sequence PEGYYNWHHGA. The active-site Charge relay system is the Ser-213. The dimerization of the capsid protein stretch occupies residues 219-223; the sequence is DNKGR. Positions 262–274 are functions as an uncleaved signal peptide for the precursor of protein E3/E2; it reads SLAIPVMCLLANT. The Extracellular segment spans residues 262–692; it reads SLAIPVMCLL…YYYELYPTMT (431 aa). Cystine bridges form between Cys-269–Cys-278, Cys-283–Cys-287, Cys-286–Cys-318, Cys-344–Cys-450, Cys-347–Cys-353, Cys-416–Cys-430, Cys-478–Cys-591, Cys-526–Cys-550, and Cys-528–Cys-545. An N-linked (GlcNAc...) asparagine; by host glycan is attached at Asn-273. Interaction with host Mxra8 receptor regions lie at residues 351-354 and 387-389; these read HSCH and HDW. Interaction with host Mxra8 receptor regions lie at residues 509–512 and 541–547; these read QSGN and VINNCKV. N-linked (GlcNAc...) asparagine; by host glycosylation is found at Asn-588 and Asn-670. The helical transmembrane segment at 693–713 threads the bilayer; sequence VVVVSVASFVLLSMVGVAVGM. Over 714–748 the chain is Cytoplasmic; it reads CMCARRRCITPYELTPGATVPFLLSLICCIRTAKA. The tract at residues 716 to 720 is interaction with the capsid protein; that stretch reads CARRR. Residues Cys-721, Cys-741, and Cys-742 are each lipidated (S-palmitoyl cysteine; by host). Positions 721–741 are transient transmembrane before p62-6K protein processing; it reads CITPYELTPGATVPFLLSLIC. An intrachain disulfide couples Cys-721 to Cys-742. Over 749 to 763 the chain is Extracellular; it reads ATYQEAAVYLWNEQQ. The chain crosses the membrane as a helical span at residues 764–784; the sequence is PLFWLQAIIPLAALIVLCNCL. The Cytoplasmic segment spans residues 785-795; it reads RLLPCCCKTLT. The chain crosses the membrane as a helical span at residues 796–816; the sequence is FLAVMSVGAHTVSAYEHVTVI. The Extracellular segment spans residues 817–1224; that stretch reads PNTVGVPYKT…AMSWVQKITG (408 aa). 3 cysteine pairs are disulfide-bonded: Cys-858–Cys-923, Cys-871–Cys-903, and Cys-877–Cys-887. The E1 fusion peptide loop stretch occupies residues 893–910; it reads VYPFMWGGAYCFCDTENT. Residues Asn-950 and Asn-1079 are each glycosylated (N-linked (GlcNAc...) asparagine; by host). 4 disulfide bridges follow: Cys-1068–Cys-1080, Cys-1110–Cys-1185, Cys-1115–Cys-1189, and Cys-1137–Cys-1179. The helical transmembrane segment at 1225–1245 threads the bilayer; it reads GVGLVVAVAALILIVVLCVSF. Cys-1242 carries the S-palmitoyl cysteine; by host lipid modification. The Cytoplasmic portion of the chain corresponds to 1246 to 1248; sequence SRH.

Homodimer. Homomultimer. Interacts with host karyopherin KPNA4; this interaction allows the nuclear import of the viral capsid protein. Interacts with spike glycoprotein E2. Interacts with host IRAK1; the interaction leads to inhibition of IRAK1-dependent signaling. In terms of assembly, the precursor of protein E3/E2 and E1 form a heterodimer shortly after synthesis. As to quaternary structure, interacts with spike glycoprotein E2. The precursor of protein E3/E2 and E1 form a heterodimer shortly after synthesis. Processing of the precursor of protein E3/E2 into E2 and E3 results in a heterodimer of the spike glycoproteins E2 and E1. Spike at virion surface are constituted of three E2-E1 heterodimers. After target cell attachment and endocytosis, E1 change conformation to form homotrimers. Interacts with 6K protein. Interacts with host MXRA8; this interaction mediates virus entry. The interaction involves 2 adjacent E2-E1 heterodimers. Interacts with spike glycoprotein E1. Processing of the precursor of protein E3/E2 into E2 and E3 results in a heterodimer of the spike glycoproteins E2 and E1. Spike at virion surface are constituted of a trimer of E2-E1 heterodimers. Interacts with 6K protein. Interacts with host MXRA8; this interaction mediates virus entry. The interaction involves 2 adjacent E2-E1 heterodimers. In terms of assembly, oligomer. Interacts with spike glycoprotein E1. Interacts with spike glycoprotein E2. In terms of processing, structural polyprotein: Specific enzymatic cleavages in vivo yield mature proteins. Capsid protein is auto-cleaved during polyprotein translation, unmasking a signal peptide at the N-terminus of the precursor of E3/E2. The remaining polyprotein is then targeted to the host endoplasmic reticulum, where host signal peptidase cleaves it into pE2, 6K and E1 proteins. pE2 is further processed to mature E3 and E2 by host furin in trans-Golgi vesicle. Post-translationally, palmitoylated via thioester bonds. These palmitoylations may induce disruption of the C-terminus transmembrane. This would result in the reorientation of E2 C-terminus from lumenal to cytoplasmic side. N-glycosylated. In terms of processing, palmitoylated via thioester bonds.

The protein resides in the virion. The protein localises to the host cytoplasm. It is found in the host cell membrane. Its subcellular location is the host nucleus. It localises to the virion membrane. The protein resides in the host Golgi apparatus. The protein localises to the host trans-Golgi network. It is found in the host endoplasmic reticulum. The enzyme catalyses Autocatalytic release of the core protein from the N-terminus of the togavirus structural polyprotein by hydrolysis of a -Trp-|-Ser- bond.. Forms an icosahedral capsid with a T=4 symmetry composed of 240 copies of the capsid protein surrounded by a lipid membrane through which penetrate 80 spikes composed of trimers of E1-E2 heterodimers. The capsid protein binds to the viral RNA genome at a site adjacent to a ribosome binding site for viral genome translation following genome release. Possesses a protease activity that results in its autocatalytic cleavage from the nascent structural protein. Following its self-cleavage, the capsid protein transiently associates with ribosomes, and within several minutes the protein binds to viral RNA and rapidly assembles into icosahedric core particles. The resulting nucleocapsid eventually associates with the cytoplasmic domain of the spike glycoprotein E2 at the cell membrane, leading to budding and formation of mature virions. In case of infection, new virions attach to target cells and after clathrin-mediated endocytosis their membrane fuses with the host endosomal membrane. This leads to the release of the nucleocapsid into the cytoplasm, followed by an uncoating event necessary for the genomic RNA to become accessible. The uncoating might be triggered by the interaction of capsid proteins with ribosomes. Binding of ribosomes would release the genomic RNA since the same region is genomic RNA-binding and ribosome-binding. Specifically inhibits interleukin-1 receptor-associated kinase 1/IRAK1-dependent signaling during viral entry, representing a means by which the alphaviruses may evade innate immune detection and activation prior to viral gene expression. Degrades host cyclic GMP-AMP synthase (CGAS) thereby inhibiting the cGAS-STING pathway. In terms of biological role, provides the signal sequence for the translocation of the precursor of protein E3/E2 to the host endoplasmic reticulum. Furin-cleaved E3 remains associated with spike glycoprotein E1 and mediates pH protection of the latter during the transport via the secretory pathway. After virion release from the host cell, the assembly protein E3 is gradually released in the extracellular space. Functionally, plays a role in viral attachment to target host cell, by binding to the cell receptor MXRA8. Synthesized as a p62 precursor which is processed by furin at the cell membrane just before virion budding, giving rise to E2-E1 heterodimer. The p62-E1 heterodimer is stable, whereas E2-E1 is unstable and dissociate at low pH. p62 is processed at the last step, presumably to avoid E1 fusion activation before its final export to cell surface. E2 C-terminus contains a transitory transmembrane that would be disrupted by palmitoylation, resulting in reorientation of the C-terminal tail from lumenal to cytoplasmic side. This step is critical since E2 C-terminus is involved in budding by interacting with capsid proteins. This release of E2 C-terminus in cytoplasm occurs lately in protein export, and precludes premature assembly of particles at the endoplasmic reticulum membrane. Its function is as follows. Acts as a viroporin that participates in virus glycoprotein processing and transport to the plasma membrane, cell permeabilization and budding of viral particles. Disrupts the calcium homeostasis of the cell, probably at the endoplasmic reticulum level. This leads to cytoplasmic calcium elevation. Because of its lipophilic properties, the 6K protein is postulated to influence the selection of lipids that interact with the transmembrane domains of the glycoproteins, which, in turn, affects the deformability of the bilayer required for the extreme curvature that occurs as budding proceeds. Present in low amount in virions, about 3% compared to viral glycoproteins. Class II viral fusion protein. Fusion activity is inactive as long as E1 is bound to E2 in mature virion. After virus attachment to target cell via host MXRA8 and endocytosis, acidification of the endosome induce dissociation of E1/E2 heterodimer and concomitant trimerization of the E1 subunits. This E1 trimer is fusion active, and promotes release of viral nucleocapsid in cytoplasm after endosome and viral membrane fusion. Efficient fusion requires the presence of cholesterol and sphingolipid in the target membrane. This Chikungunya virus (strain Nagpur) (CHIKV) protein is Structural polyprotein.